We begin with the raw amino-acid sequence, 327 residues long: Putative HTH-type transcriptional regulatory protein MM_0444 (327 aa).

The 59-residue stretch at 132–190 (LKKARTTQSMSLGTLASMVGVSRRTISKYEEEGMDASIDVVLHLEDIFGVELAKPIDIL) folds into the HTH cro/C1-type domain. The segment at residues 143–162 (LGTLASMVGVSRRTISKYEE) is a DNA-binding region (H-T-H motif). Residues 195 to 214 (SRKPRKKAEPEKEEPKGKPG) form a disordered region. Positions 201 to 211 (KAEPEKEEPKG) are enriched in basic and acidic residues.

This Methanosarcina mazei (strain ATCC BAA-159 / DSM 3647 / Goe1 / Go1 / JCM 11833 / OCM 88) (Methanosarcina frisia) protein is Putative HTH-type transcriptional regulatory protein MM_0444.